Reading from the N-terminus, the 107-residue chain is UPF0145 protein Memar_1285 (107 aa).

This sequence belongs to the UPF0145 family.

This Methanoculleus marisnigri (strain ATCC 35101 / DSM 1498 / JR1) protein is UPF0145 protein Memar_1285.